We begin with the raw amino-acid sequence, 886 residues long: Alanine--tRNA ligase (886 aa).

4 residues coordinate Zn(2+): His564, His568, Cys666, and His670.

Belongs to the class-II aminoacyl-tRNA synthetase family. Zn(2+) is required as a cofactor.

It is found in the cytoplasm. It catalyses the reaction tRNA(Ala) + L-alanine + ATP = L-alanyl-tRNA(Ala) + AMP + diphosphate. In terms of biological role, catalyzes the attachment of alanine to tRNA(Ala) in a two-step reaction: alanine is first activated by ATP to form Ala-AMP and then transferred to the acceptor end of tRNA(Ala). Also edits incorrectly charged Ser-tRNA(Ala) and Gly-tRNA(Ala) via its editing domain. This is Alanine--tRNA ligase from Prochlorococcus marinus subsp. pastoris (strain CCMP1986 / NIES-2087 / MED4).